A 306-amino-acid chain; its full sequence is Protein SEC13 homolog (306 aa).

WD repeat units follow at residues 11-50, 56-97, 102-143, 150-195, 202-245, and 252-291; these read QHRD…QSYP, GHNG…WQKT, THEA…QQWQ, CHDQ…NEWT, CHKD…TAEW, and QAPC…QWIK.

Belongs to the WD repeat SEC13 family. In terms of assembly, probably part of the GATOR complex.

Its subcellular location is the cytoplasmic vesicle. It is found in the COPII-coated vesicle membrane. The protein localises to the endoplasmic reticulum membrane. It localises to the nucleus. The protein resides in the nuclear pore complex. Its subcellular location is the lysosome membrane. Functionally, functions as a component of the nuclear pore complex (NPC) and the COPII coat. As a component of the GATOR complex may function in the amino acid-sensing branch of the TORC1 signaling pathway. The sequence is that of Protein SEC13 homolog from Caenorhabditis briggsae.